A 250-amino-acid polypeptide reads, in one-letter code: Acetylglutamate kinase (250 aa).

Residues 41–42, arginine 63, and asparagine 156 contribute to the substrate site; that span reads GG.

Belongs to the acetylglutamate kinase family. ArgB subfamily.

The protein resides in the cytoplasm. It catalyses the reaction N-acetyl-L-glutamate + ATP = N-acetyl-L-glutamyl 5-phosphate + ADP. It participates in amino-acid biosynthesis; L-arginine biosynthesis; N(2)-acetyl-L-ornithine from L-glutamate: step 2/4. Its function is as follows. Catalyzes the ATP-dependent phosphorylation of N-acetyl-L-glutamate. In Listeria monocytogenes serotype 4b (strain CLIP80459), this protein is Acetylglutamate kinase.